A 338-amino-acid polypeptide reads, in one-letter code: Fructose-1,6-bisphosphatase 1 (338 aa).

The residue at position 2 (threonine 2) is an N-acetylthreonine. AMP contacts are provided by residues 18–22 (VMEEG) and 28–32 (TGEMT). 2 residues coordinate Mg(2+): aspartate 69 and glutamate 98. AMP is bound at residue 113–114 (KY). Mg(2+) is bound by residues aspartate 119, leucine 121, and aspartate 122. 122-125 (DGSS) is a substrate binding site. Position 141 (lysine 141) interacts with AMP. At lysine 151 the chain carries N6-succinyllysine. Serine 208 bears the Phosphoserine mark. Residues 213-216 (NEGY), 244-249 (RYVGSM), tyrosine 265, and 275-277 (KLR) contribute to the substrate site. 3 positions are modified to phosphotyrosine: tyrosine 216, tyrosine 245, and tyrosine 265. Glutamate 281 is a Mg(2+) binding site.

Belongs to the FBPase class 1 family. As to quaternary structure, homotetramer. Requires Mg(2+) as cofactor.

It catalyses the reaction beta-D-fructose 1,6-bisphosphate + H2O = beta-D-fructose 6-phosphate + phosphate. The protein operates within carbohydrate biosynthesis; gluconeogenesis. Its activity is regulated as follows. Subject to complex allosteric regulation. The enzyme can assume an active R-state, or an inactive T-state. Intermediate conformations may exist. AMP acts as an allosteric inhibitor. AMP binding affects the turnover of bound substrate and not the affinity for substrate. Fructose 2,6-bisphosphate acts as a competitive inhibitor. Fructose 2,6-bisphosphate and AMP have synergistic effects. Catalyzes the hydrolysis of fructose 1,6-bisphosphate to fructose 6-phosphate in the presence of divalent cations, acting as a rate-limiting enzyme in gluconeogenesis. Plays a role in regulating glucose sensing and insulin secretion of pancreatic beta-cells. Appears to modulate glycerol gluconeogenesis in liver. Important regulator of appetite and adiposity; increased expression of the protein in liver after nutrient excess increases circulating satiety hormones and reduces appetite-stimulating neuropeptides and thus seems to provide a feedback mechanism to limit weight gain. This Bos taurus (Bovine) protein is Fructose-1,6-bisphosphatase 1 (FBP1).